A 485-amino-acid polypeptide reads, in one-letter code: NADH-quinone oxidoreductase subunit N (485 aa).

14 consecutive transmembrane segments (helical) span residues 8–28 (LIALLPLLIVGLTVVVVMLSI), 35–55 (FVNATLAVVGLNLALFSLYFV), 75–95 (FYTGLVILASLATCTFAYPWL), 105–125 (FYLLVLIAALGGVVLASASHL), 127–147 (SLFIGIELISLPLFGLVGYAF), 159–179 (YTILSAAASSFLLFGMALVYA), 203–223 (LLAGLGLMIVGFGFKLSLVPF), 235–255 (PAPVSTFLATASKIAIFGVLM), 271–291 (TVLGIIAVASMLFGNLMAISQ), 297–317 (LLGYSSIAHLGYLLVALIAVQ), 326–346 (VGVYLAGYLFSSLGAFGVVSL), 373–393 (AAVMTVMMLSLAGIPMTLGFI), 408–427 (WWLTGAVVLGSAIGLYYYLR), and 449–469 (AFTAGGVVVLISAILVLVLGI).

This sequence belongs to the complex I subunit 2 family. NDH-1 is composed of 13 different subunits. Subunits NuoA, H, J, K, L, M, N constitute the membrane sector of the complex.

It is found in the cell inner membrane. It catalyses the reaction a quinone + NADH + 5 H(+)(in) = a quinol + NAD(+) + 4 H(+)(out). In terms of biological role, NDH-1 shuttles electrons from NADH, via FMN and iron-sulfur (Fe-S) centers, to quinones in the respiratory chain. The immediate electron acceptor for the enzyme in this species is believed to be ubiquinone. Couples the redox reaction to proton translocation (for every two electrons transferred, four hydrogen ions are translocated across the cytoplasmic membrane), and thus conserves the redox energy in a proton gradient. In Erwinia tasmaniensis (strain DSM 17950 / CFBP 7177 / CIP 109463 / NCPPB 4357 / Et1/99), this protein is NADH-quinone oxidoreductase subunit N.